Here is a 318-residue protein sequence, read N- to C-terminus: NADH-ubiquinone oxidoreductase chain 1 (318 aa).

8 consecutive transmembrane segments (helical) span residues 2-22 (FTINILLLVIPILLAVAFLTL), 70-90 (MFIIAPILALTLALTMWIPLP), 100-120 (LGVLFMLAMSSLAVYSILWSG), 146-166 (LAIILLSVLLMNGSFTLSTLI), 171-191 (HLWLIFPSWPLAMMWFISTLA), 222-242 (LFFMAEYANIIMMNAFTTILF), 254-276 (LYTINFTTKTLLLTTSFLWIRAS), and 294-314 (LPLTLALCMWHVSLPITTSSI).

It belongs to the complex I subunit 1 family. In terms of assembly, core subunit of respiratory chain NADH dehydrogenase (Complex I) which is composed of 45 different subunits.

It is found in the mitochondrion inner membrane. The enzyme catalyses a ubiquinone + NADH + 5 H(+)(in) = a ubiquinol + NAD(+) + 4 H(+)(out). Core subunit of the mitochondrial membrane respiratory chain NADH dehydrogenase (Complex I) which catalyzes electron transfer from NADH through the respiratory chain, using ubiquinone as an electron acceptor. Essential for the catalytic activity and assembly of complex I. This Ceratotherium simum (White rhinoceros) protein is NADH-ubiquinone oxidoreductase chain 1 (MT-ND1).